An 853-amino-acid polypeptide reads, in one-letter code: MSAIENFDAHTPMMQQYLRLKAQHPEILLFYRMGDFYELFYDDAKRASQLLDISLTKRGASAGEPIPMAGIPYHAVENYLAKLVNQGESVAICEQIGDPATSKGPVERKVVRIVTPGTISDEALLQERQDNLLAAIWQDSKGFGYATLDISSGRFRLSEPADRETMAAELQRTNPAELLYAEDFAEMSLIEGRRGLRRRPLWEFEIDTARQQLNLQFGTRDLVGFGVENAPRGLCAAGCLLQYAKDTQRTTLPHIRSITMEREQDSIIMDAATRRNLEITQNLAGGAENTLASVLDCTVTPMGSRMLKRWLHMPVRDTRVLLERQQTIGALQDFTAGLQPVLRQVGDLERILARLALRTARPRDLARMRHAFQQLPELRAQLETVDSAPVQALREKMGEFAELRDLLERAIIDTPPVLVRDGGVIASGYNEELDEWRALADGATDYLERLEVRERERTGLDTLKVGFNAVHGYYIQISRGQSHLAPINYMRRQTLKNAERYIIPELKEYEDKVLTSKGKALALEKQLYEELFDLLLPHLEALQQSASALAELDVLVNLAERAYTLNYTCPTFIDKPGIRITEGRHPVVEQVLNEPFIANPLNLSPQRRMLIITGPNMGGKSTYMRQTALIALMAYIGSYVPAQKVEIGPIDRIFTRVGAADDLASGRSTFMVEMTETANILHNATEYSLVLMDEIGRGTSTYDGLSLAWACAENLANKIKALTLFATHYFELTQLPEKMEDVANVHLDALEHGDTIAFMHSVQDGAASKSYGLAVAALAGVPKEVIKRARQKLRELESISPNAAATQVDGTQMSLLSVPEETSPAVEALENLDPDSLTPRQALEWIYRLKSLV.

614–621 (GPNMGGKS) is an ATP binding site.

Belongs to the DNA mismatch repair MutS family.

This protein is involved in the repair of mismatches in DNA. It is possible that it carries out the mismatch recognition step. This protein has a weak ATPase activity. This Shigella boydii serotype 18 (strain CDC 3083-94 / BS512) protein is DNA mismatch repair protein MutS.